The sequence spans 193 residues: Ferredoxin-2, mitochondrial (193 aa).

Positions 38 to 70 are disordered; sequence QATPEKLETSNEEEGSSSAQITAGVESDAENQR. The 2Fe-2S ferredoxin-type domain maps to 78-180; the sequence is VEVVFLDRSG…GAEFTLPKIT (103 aa). Cys-115, Cys-121, Cys-124, and Cys-161 together coordinate [2Fe-2S] cluster.

This sequence belongs to the adrenodoxin/putidaredoxin family. In terms of assembly, component of the mitochondrial core iron-sulfur cluster (ISC) complex composed of NFS1, LYRM4, NDUFAB1, ISCU, FXN, and FDX2; this complex is a heterohexamer containing two copies of each monomer. It depends on [2Fe-2S] cluster as a cofactor.

It is found in the mitochondrion. The protein resides in the mitochondrion matrix. Its function is as follows. Electron donor, of the core iron-sulfur cluster (ISC) assembly complex, that acts to reduce the persulfide into sulfide during [2Fe-2S] clusters assembly on the scaffolding protein ISCU. The core iron-sulfur cluster (ISC) assembly complex is involved in the de novo synthesis of a [2Fe-2S] cluster, the first step of the mitochondrial iron-sulfur protein biogenesis. This process is initiated by the cysteine desulfurase complex (NFS1:LYRM4:NDUFAB1) that produces persulfide which is delivered on the scaffold protein ISCU in a FXN-dependent manner. Then this complex is stabilized by FDX2 which provides reducing equivalents to accomplish the [2Fe-2S] cluster assembly. Finally, the [2Fe-2S] cluster is transferred from ISCU to chaperone proteins, including HSCB, HSPA9 and GLRX5. Essential for coenzyme Q biosynthesis: together with FDXR, transfers the electrons required for the hydroxylation reaction performed by COQ6. This is Ferredoxin-2, mitochondrial from Xenopus laevis (African clawed frog).